The following is a 164-amino-acid chain: C-phycoerythrin alpha chain (164 aa).

2 residues coordinate (2R,3E)-phycoerythrobilin: Cys-82 and Cys-139.

Belongs to the phycobiliprotein family. In terms of assembly, heterodimer of an alpha and a beta chain. Contains two covalently linked bilin chromophores.

The protein localises to the cellular thylakoid membrane. Functionally, light-harvesting photosynthetic bile pigment-protein from the phycobiliprotein complex. This chain is C-phycoerythrin alpha chain (cpeA), found in Pseudanabaena tenuis (strain PCC 7409).